The sequence spans 103 residues: MQNQKIRIRLKAFDYHLIDRSAQEIVDTAKRTGAVVKGPVPLPTKIERFDILRSPHVNKTSRDQFEIRTHLRLMDIIDPTDKTVDALMKLDLPAGVDVEIKLQ.

It belongs to the universal ribosomal protein uS10 family. As to quaternary structure, part of the 30S ribosomal subunit.

Involved in the binding of tRNA to the ribosomes. The chain is Small ribosomal subunit protein uS10 from Laribacter hongkongensis (strain HLHK9).